A 163-amino-acid chain; its full sequence is CDP-archaeol synthase (163 aa).

Helical transmembrane passes span 4–24 (LLLG…APFI), 52–72 (LLLS…FLGI), 75–95 (IIIG…GAFI), 107–127 (APIL…ISFN), and 128–148 (VNLN…LHMF).

The protein belongs to the CDP-archaeol synthase family. Mg(2+) is required as a cofactor.

Its subcellular location is the cell membrane. It carries out the reaction 2,3-bis-O-(geranylgeranyl)-sn-glycerol 1-phosphate + CTP + H(+) = CDP-2,3-bis-O-(geranylgeranyl)-sn-glycerol + diphosphate. It functions in the pathway membrane lipid metabolism; glycerophospholipid metabolism. In terms of biological role, catalyzes the formation of CDP-2,3-bis-(O-geranylgeranyl)-sn-glycerol (CDP-archaeol) from 2,3-bis-(O-geranylgeranyl)-sn-glycerol 1-phosphate (DGGGP) and CTP. This reaction is the third ether-bond-formation step in the biosynthesis of archaeal membrane lipids. The polypeptide is CDP-archaeol synthase (Sulfolobus acidocaldarius (strain ATCC 33909 / DSM 639 / JCM 8929 / NBRC 15157 / NCIMB 11770)).